The primary structure comprises 888 residues: Leucine--tRNA ligase (888 aa).

The 'HIGH' region signature appears at 43-53 (PYPSGRIHMGH). Positions 644 to 648 (KMSKS) match the 'KMSKS' region motif. Residue Lys-647 coordinates ATP.

Belongs to the class-I aminoacyl-tRNA synthetase family.

The protein localises to the cytoplasm. The catalysed reaction is tRNA(Leu) + L-leucine + ATP = L-leucyl-tRNA(Leu) + AMP + diphosphate. This Rhodopseudomonas palustris (strain BisA53) protein is Leucine--tRNA ligase.